A 307-amino-acid polypeptide reads, in one-letter code: Ornithine carbamoyltransferase (307 aa).

Carbamoyl phosphate contacts are provided by residues 56–59 (STRT), Gln83, Arg107, and 134–137 (HPCQ). L-ornithine contacts are provided by residues Asn165, Asp223, and 227-228 (SM). Carbamoyl phosphate-binding positions include 263 to 264 (CL) and Arg291.

This sequence belongs to the aspartate/ornithine carbamoyltransferase superfamily. OTCase family.

Its subcellular location is the cytoplasm. The enzyme catalyses carbamoyl phosphate + L-ornithine = L-citrulline + phosphate + H(+). Its pathway is amino-acid biosynthesis; L-arginine biosynthesis; L-arginine from L-ornithine and carbamoyl phosphate: step 1/3. Functionally, reversibly catalyzes the transfer of the carbamoyl group from carbamoyl phosphate (CP) to the N(epsilon) atom of ornithine (ORN) to produce L-citrulline. The sequence is that of Ornithine carbamoyltransferase from Cupriavidus metallidurans (strain ATCC 43123 / DSM 2839 / NBRC 102507 / CH34) (Ralstonia metallidurans).